The primary structure comprises 132 residues: NLP effector protein 15 (132 aa).

A Conserved undecapeptide motif I motif is present at residues 1-9 (MYSWYFPKD). Positions 16–22 (GHRHDWE) match the Hepta-peptide GHRHDWE motif II motif.

This sequence belongs to the Necrosis inducing protein (NPP1) family.

Its subcellular location is the secreted. Its function is as follows. Secreted effector that contributes moderately to virulence during infection by P.capsici. Causes only small yellow areas at 3 days after inoculation of host C.annuum leaves; these areas expand somewhat and became necrotic at 7 days after inoculation. Leads only to chlorotic areas, without necrosis at 7 days after non-host N.benthamiana leaves infection. This chain is NLP effector protein 15, found in Phytophthora capsici.